The primary structure comprises 1061 residues: MPKRTDVHKIMVIGSGPIIIGQAAEFDYSGTQACLALREEGYEVVLVNSNPATIMTDTEIADKVYIEPLTVESVSRIIRQEFPDAILPTLGGQIGLNLAIALAKTGILEELGIKLLGTQLDAIDQAEDRQRFKDLMQELNEPVPDSKTVETVQEALDFAAEIGYPVIVRPAFTMGGTGGGLCDNPEQLKEIVANGLELSPATQCLIEKSIMGYKEIEFEVMRDADNNAMVVCSMENFDPVGIHTGDSIVFAPTQTLSDREYQMLRNCSLKLIRALKIEGGCNVQLALDPNSYRYYVIEVNPRVSRSSALASKATGYPIAKLAAKIAVGLTLDEIKNPVTGTTFAEFEPALDYVVAKIPRWPFDKFTRANRRLGTQMKATGEVMAIGRSAQEALQKAVRSLEIDEKDLISAKAQSATDDEVEEKLFHAQDDRLFYIAEAFRRGYTIEEVHELTKINLYYLDIVKQIVELESELSQNKEDLDVLKRAKRYGYSDYTIAKLWGTTEDEVRNLRKEHKLLPVYKMVDTCAAEFDSSTPYFYSSYDLENESKKSDKKSVLVIGSGPIRIGQGVEFDYATVHSVKAIQKLGYEAIVMNSNPETVSTDFSISDKLYFEPLTLEDVLNVIDLEQPMGVIVQFGGQTAINLAAGLEAHSVKILGTTVEDLDRAEDRELFDQTIKNLGLKQPIGKTATTQEQVIACAEEIGYPVLVRPSYVLGGRAMEIVNNEQELLDYLAQNAPAEIDHPILVDAYLSGLECEVDAICDGKDVLLPGIMEHIEHAGVHSGDSMAVYPPQSFDENIKQQIVDATEKLAVALKCVGIMNIQFIIHNNEAYVLEVNPRASRTVPFLSKITGIEMAQVATRVILGESLAEQGYQSGLYRESDMVHVKAPVFSFSKLADVDSFLGPEMKSTGEVMGSDYTFEKALYKAFTGAKMELPDNGNVLLTIEDKDKDAVLPLAKRFSKIGYRMFATEGTSQFLRENGLFVQTVDKLGKDTGNETSLHDLIVNDGVDLVINTMSHDQEVASDGFVIRQLAIEHNIALLTSLNTADALLKALENRSFATNSL.

Residues 1 to 401 are carboxyphosphate synthetic domain; the sequence is MPKRTDVHKI…ALQKAVRSLE (401 aa). Residues arginine 129, arginine 169, glycine 175, glycine 176, lysine 208, isoleucine 210, glutamate 215, glycine 241, isoleucine 242, histidine 243, glutamine 284, and glutamate 298 each coordinate ATP. The 195-residue stretch at 133 to 327 folds into the ATP-grasp 1 domain; sequence KDLMQELNEP…IAKLAAKIAV (195 aa). Residues glutamine 284, glutamate 298, and asparagine 300 each contribute to the Mg(2+) site. Glutamine 284, glutamate 298, and asparagine 300 together coordinate Mn(2+). The oligomerization domain stretch occupies residues 402 to 546; it reads IDEKDLISAK…YSSYDLENES (145 aa). The segment at 547–929 is carbamoyl phosphate synthetic domain; that stretch reads KKSDKKSVLV…ALYKAFTGAK (383 aa). Residues 671 to 861 form the ATP-grasp 2 domain; the sequence is DQTIKNLGLK…MAQVATRVIL (191 aa). ATP contacts are provided by arginine 707, alanine 746, leucine 748, glutamate 752, glycine 777, valine 778, histidine 779, serine 780, glutamine 820, and glutamate 832. Mg(2+)-binding residues include glutamine 820, glutamate 832, and asparagine 834. Mn(2+)-binding residues include glutamine 820, glutamate 832, and asparagine 834. In terms of domain architecture, MGS-like spans 930-1061; sequence MELPDNGNVL…ENRSFATNSL (132 aa). The tract at residues 930-1061 is allosteric domain; it reads MELPDNGNVL…ENRSFATNSL (132 aa).

This sequence belongs to the CarB family. Composed of two chains; the small (or glutamine) chain promotes the hydrolysis of glutamine to ammonia, which is used by the large (or ammonia) chain to synthesize carbamoyl phosphate. Tetramer of heterodimers (alpha,beta)4. The cofactor is Mg(2+). Mn(2+) is required as a cofactor.

It catalyses the reaction hydrogencarbonate + L-glutamine + 2 ATP + H2O = carbamoyl phosphate + L-glutamate + 2 ADP + phosphate + 2 H(+). It carries out the reaction hydrogencarbonate + NH4(+) + 2 ATP = carbamoyl phosphate + 2 ADP + phosphate + 2 H(+). It participates in amino-acid biosynthesis; L-arginine biosynthesis; carbamoyl phosphate from bicarbonate: step 1/1. It functions in the pathway pyrimidine metabolism; UMP biosynthesis via de novo pathway; (S)-dihydroorotate from bicarbonate: step 1/3. Functionally, large subunit of the glutamine-dependent carbamoyl phosphate synthetase (CPSase). CPSase catalyzes the formation of carbamoyl phosphate from the ammonia moiety of glutamine, carbonate, and phosphate donated by ATP, constituting the first step of 2 biosynthetic pathways, one leading to arginine and/or urea and the other to pyrimidine nucleotides. The large subunit (synthetase) binds the substrates ammonia (free or transferred from glutamine from the small subunit), hydrogencarbonate and ATP and carries out an ATP-coupled ligase reaction, activating hydrogencarbonate by forming carboxy phosphate which reacts with ammonia to form carbamoyl phosphate. This is Carbamoyl phosphate synthase large chain from Ligilactobacillus salivarius (strain UCC118) (Lactobacillus salivarius).